The following is a 257-amino-acid chain: Phosphate import ATP-binding protein PstB (257 aa).

In terms of domain architecture, ABC transporter spans 11–252 (IQVRDLNFYY…PAKKQTEDYI (242 aa)). An ATP-binding site is contributed by 43–50 (GPSGCGKS).

The protein belongs to the ABC transporter superfamily. Phosphate importer (TC 3.A.1.7) family. In terms of assembly, the complex is composed of two ATP-binding proteins (PstB), two transmembrane proteins (PstC and PstA) and a solute-binding protein (PstS).

The protein resides in the cell inner membrane. The enzyme catalyses phosphate(out) + ATP + H2O = ADP + 2 phosphate(in) + H(+). Part of the ABC transporter complex PstSACB involved in phosphate import. Responsible for energy coupling to the transport system. The sequence is that of Phosphate import ATP-binding protein PstB from Enterobacter cloacae.